Here is a 109-residue protein sequence, read N- to C-terminus: Thiosulfate sulfurtransferase GlpE (109 aa).

The Rhodanese domain maps to 16–104; the sequence is RAEGAVVVDI…WRSTYPGETA (89 aa). Cysteine 64 (cysteine persulfide intermediate) is an active-site residue.

The protein belongs to the GlpE family.

It is found in the cytoplasm. It carries out the reaction thiosulfate + hydrogen cyanide = thiocyanate + sulfite + 2 H(+). It catalyses the reaction thiosulfate + [thioredoxin]-dithiol = [thioredoxin]-disulfide + hydrogen sulfide + sulfite + 2 H(+). Transferase that catalyzes the transfer of sulfur from thiosulfate to thiophilic acceptors such as cyanide or dithiols. May function in a CysM-independent thiosulfate assimilation pathway by catalyzing the conversion of thiosulfate to sulfite, which can then be used for L-cysteine biosynthesis. This is Thiosulfate sulfurtransferase GlpE from Pseudomonas entomophila (strain L48).